A 382-amino-acid chain; its full sequence is D-alanine--D-alanine ligase (382 aa).

The ATP-grasp domain occupies 161–372 (KVVFEAAGLQ…YAELIDELIY (212 aa)). 193 to 248 (VDRLGYPVFVKPARAGSSMGISKVDSLEGLDAAIAAAREHDLKLVIEAGIVGREIE) is a binding site for ATP. Asp326, Glu339, and Asn341 together coordinate Mg(2+).

The protein belongs to the D-alanine--D-alanine ligase family. Mg(2+) serves as cofactor. It depends on Mn(2+) as a cofactor.

Its subcellular location is the cytoplasm. It catalyses the reaction 2 D-alanine + ATP = D-alanyl-D-alanine + ADP + phosphate + H(+). It functions in the pathway cell wall biogenesis; peptidoglycan biosynthesis. In terms of biological role, cell wall formation. This chain is D-alanine--D-alanine ligase, found in Arthrobacter sp. (strain FB24).